Reading from the N-terminus, the 262-residue chain is Indole-3-glycerol phosphate synthase (262 aa).

This sequence belongs to the TrpC family.

It carries out the reaction 1-(2-carboxyphenylamino)-1-deoxy-D-ribulose 5-phosphate + H(+) = (1S,2R)-1-C-(indol-3-yl)glycerol 3-phosphate + CO2 + H2O. Its pathway is amino-acid biosynthesis; L-tryptophan biosynthesis; L-tryptophan from chorismate: step 4/5. The sequence is that of Indole-3-glycerol phosphate synthase from Nitratiruptor sp. (strain SB155-2).